Consider the following 737-residue polypeptide: Catalase-peroxidase (737 aa).

The segment at residues 102–225 is a cross-link (tryptophyl-tyrosyl-methioninium (Trp-Tyr) (with M-251)); it reads WHSAGTYRTG…LGAVQMGLIY (124 aa). His-103 (proton acceptor) is an active-site residue. Residues 225–251 constitute a cross-link (tryptophyl-tyrosyl-methioninium (Tyr-Met) (with W-102)); that stretch reads YVNPEGPNGKPDPLAAAHDIRETFARM. A heme b-binding site is contributed by His-266.

This sequence belongs to the peroxidase family. Peroxidase/catalase subfamily. In terms of assembly, homodimer or homotetramer. Heme b serves as cofactor. Formation of the three residue Trp-Tyr-Met cross-link is important for the catalase, but not the peroxidase activity of the enzyme.

It carries out the reaction H2O2 + AH2 = A + 2 H2O. The catalysed reaction is 2 H2O2 = O2 + 2 H2O. In terms of biological role, bifunctional enzyme with both catalase and broad-spectrum peroxidase activity. This Caulobacter sp. (strain K31) protein is Catalase-peroxidase.